The primary structure comprises 132 residues: Putative RNase AF_2433 (132 aa).

Active-site residues include Arg-90 and His-95. Residues 90-97 carry the RX(4)HXY motif motif; it reads RNWLVHRY. An O-di-AMP-tyrosine modification is found at Tyr-97.

Belongs to the HepT RNase toxin family. As to quaternary structure, homodimer, probably forms a complex with cognate antitoxin AF_2432. In terms of processing, modified by cognate antitoxin AF_2432; probably at least 2 successive AMPylation events occur on Tyr-97.

Its function is as follows. Probable toxic component of a putative type VII toxin-antitoxin (TA) system, probably an RNase. Probably neutralized by cognate antitoxin AF_2432. Neutralization may be due to AMPylation by AF_2432. This chain is Putative RNase AF_2433, found in Archaeoglobus fulgidus (strain ATCC 49558 / DSM 4304 / JCM 9628 / NBRC 100126 / VC-16).